The sequence spans 130 residues: uncharacterized protein (130 aa).

This is an uncharacterized protein from Escherichia coli (strain K12).